Reading from the N-terminus, the 219-residue chain is Large ribosomal subunit protein bL25 (219 aa).

Residues 194 to 219 (SSTELEETPEVPASAVPTTDQGESAE) are disordered. Positions 209 to 219 (VPTTDQGESAE) are enriched in polar residues.

This sequence belongs to the bacterial ribosomal protein bL25 family. CTC subfamily. As to quaternary structure, part of the 50S ribosomal subunit; part of the 5S rRNA/L5/L18/L25 subcomplex. Contacts the 5S rRNA. Binds to the 5S rRNA independently of L5 and L18.

In terms of biological role, this is one of the proteins that binds to the 5S RNA in the ribosome where it forms part of the central protuberance. This chain is Large ribosomal subunit protein bL25, found in Legionella pneumophila (strain Paris).